A 263-amino-acid chain; its full sequence is ATP synthase subunit a (263 aa).

Residues 1 to 14 (MYLNNNNNMKYYIN) constitute a propeptide, removed in mature form. The next 6 membrane-spanning stretches (helical) occupy residues 35–57 (FSFI…ILTM), 95–117 (VWGY…NLIS), 129–151 (VVFV…FYTH), 156–178 (FGLF…IELL), 191–213 (LSAN…FNLM), and 228–250 (IAIL…VWCI).

Belongs to the ATPase A chain family. As to quaternary structure, F-type ATPases have 2 components, CF(1) - the catalytic core - and CF(0) - the membrane proton channel. In yeast, the dimeric form of ATP synthase consists of 18 polypeptides: alpha, beta, gamma, delta, epsilon, 4 (B), 5 (OSCP), 6 (A), 8, 9 (C), d, E (Tim11), f, g, h, i, j and k.

It is found in the mitochondrion inner membrane. Functionally, mitochondrial membrane ATP synthase (F(1)F(0) ATP synthase or Complex V) produces ATP from ADP in the presence of a proton gradient across the membrane which is generated by electron transport complexes of the respiratory chain. F-type ATPases consist of two structural domains, F(1) - containing the extramembraneous catalytic core and F(0) - containing the membrane proton channel, linked together by a central stalk and a peripheral stalk. During catalysis, ATP synthesis in the catalytic domain of F(1) is coupled via a rotary mechanism of the central stalk subunits to proton translocation. Key component of the proton channel; it may play a direct role in the translocation of protons across the membrane. This is ATP synthase subunit a (ATP6) from Eremothecium gossypii (strain ATCC 10895 / CBS 109.51 / FGSC 9923 / NRRL Y-1056) (Yeast).